The chain runs to 308 residues: UDP-N-acetylenolpyruvoylglucosamine reductase (308 aa).

One can recognise an FAD-binding PCMH-type domain in the interval 22-185 (RVGGPADWLF…VEAAFRADAG (164 aa)). Residue Arg165 is part of the active site. Residues 197–211 (QIARRDSSQPTRDRS) show a composition bias toward basic and acidic residues. Positions 197–228 (QIARRDSSQPTRDRSAGSTFRNPAGFSSTGRA) are disordered. The segment covering 212–226 (AGSTFRNPAGFSSTG) has biased composition (polar residues). Ser214 (proton donor) is an active-site residue. Glu296 is an active-site residue.

It belongs to the MurB family. FAD is required as a cofactor.

Its subcellular location is the cytoplasm. The catalysed reaction is UDP-N-acetyl-alpha-D-muramate + NADP(+) = UDP-N-acetyl-3-O-(1-carboxyvinyl)-alpha-D-glucosamine + NADPH + H(+). It participates in cell wall biogenesis; peptidoglycan biosynthesis. In terms of biological role, cell wall formation. In Cereibacter sphaeroides (strain ATCC 17025 / ATH 2.4.3) (Rhodobacter sphaeroides), this protein is UDP-N-acetylenolpyruvoylglucosamine reductase.